Here is a 158-residue protein sequence, read N- to C-terminus: UPF0098 protein YbhB (158 aa).

This sequence belongs to the UPF0098 family. As to quaternary structure, homodimer.

It is found in the cytoplasm. This chain is UPF0098 protein YbhB (ybhB), found in Escherichia coli (strain K12).